Reading from the N-terminus, the 129-residue chain is Small ribosomal subunit protein eS6 (129 aa).

Residues 53-88 (TGGSDTSGRPMRPDVRGVTTKEIMSDGGVGFEPTTD) are disordered.

This sequence belongs to the eukaryotic ribosomal protein eS6 family.

In Haloarcula marismortui (strain ATCC 43049 / DSM 3752 / JCM 8966 / VKM B-1809) (Halobacterium marismortui), this protein is Small ribosomal subunit protein eS6 (rps6e).